The chain runs to 352 residues: Galactokinase (352 aa).

Residue 17 to 20 coordinates substrate; the sequence is EHTD. Residues Ser-49 and 101–107 each bind ATP; that span reads GAGLSSS. Positions 107 and 139 each coordinate Mg(2+). The Proton acceptor role is filled by Asp-151. Tyr-200 is a binding site for substrate.

This sequence belongs to the GHMP kinase family. GalK subfamily. Monomer.

It localises to the cytoplasm. It carries out the reaction alpha-D-galactose + ATP = alpha-D-galactose 1-phosphate + ADP + H(+). It participates in carbohydrate metabolism; galactose metabolism. Catalyzes the transfer of the gamma-phosphate of ATP to D-galactose to form alpha-D-galactose-1-phosphate (Gal-1-P). Is very specific for its substrate, since it is not able to use D-glucose, D-fructose, D-mannose, 2-deoxy-D-glucose, and D-glucosamine as substrates. The protein is Galactokinase of Pyrococcus furiosus (strain ATCC 43587 / DSM 3638 / JCM 8422 / Vc1).